We begin with the raw amino-acid sequence, 447 residues long: UPF0597 protein Amet_4665 (447 aa).

It belongs to the UPF0597 family.

This Alkaliphilus metalliredigens (strain QYMF) protein is UPF0597 protein Amet_4665.